The following is a 54-amino-acid chain: Large ribosomal subunit protein bL33 (54 aa).

It belongs to the bacterial ribosomal protein bL33 family.

The sequence is that of Large ribosomal subunit protein bL33 from Stenotrophomonas maltophilia (strain K279a).